An 862-amino-acid chain; its full sequence is Bifunctional uridylyltransferase/uridylyl-removing enzyme (862 aa).

A uridylyltransferase region spans residues 1 to 328 (MSTAAIPTDA…FPRRAGAAIV (328 aa)). A uridylyl-removing region spans residues 329 to 685 (INERFQAVRE…ARVSDADQGV (357 aa)). Residues 447–563 (VDQHIMMVLR…GRFADTVGTE (117 aa)) enclose the HD domain. 2 ACT domains span residues 686–765 (QVMV…DRPS) and 794–862 (ILSL…RLHI).

Belongs to the GlnD family. It depends on Mg(2+) as a cofactor.

The enzyme catalyses [protein-PII]-L-tyrosine + UTP = [protein-PII]-uridylyl-L-tyrosine + diphosphate. It catalyses the reaction [protein-PII]-uridylyl-L-tyrosine + H2O = [protein-PII]-L-tyrosine + UMP + H(+). Its activity is regulated as follows. Uridylyltransferase (UTase) activity is inhibited by glutamine, while glutamine activates uridylyl-removing (UR) activity. In terms of biological role, modifies, by uridylylation and deuridylylation, the PII regulatory proteins (GlnB and homologs), in response to the nitrogen status of the cell that GlnD senses through the glutamine level. Under low glutamine levels, catalyzes the conversion of the PII proteins and UTP to PII-UMP and PPi, while under higher glutamine levels, GlnD hydrolyzes PII-UMP to PII and UMP (deuridylylation). Thus, controls uridylylation state and activity of the PII proteins, and plays an important role in the regulation of nitrogen assimilation and metabolism. This is Bifunctional uridylyltransferase/uridylyl-removing enzyme from Aromatoleum aromaticum (strain DSM 19018 / LMG 30748 / EbN1) (Azoarcus sp. (strain EbN1)).